The following is an 868-amino-acid chain: DNA topoisomerase 1 (868 aa).

Residues 3-147 (KSLVIVESPA…RYKRVVFNEI (145 aa)) form the Toprim domain. Glutamate 9 is a binding site for Mg(2+). Residues 34–70 (IRDLPTSGSSSSKEPAAKGRKSASEAPALSPKEKARR) form a disordered region. Mg(2+) is bound at residue aspartate 116. One can recognise a Topo IA-type catalytic domain in the interval 163-580 (DINRVNAQQA…EFYGDFKKKL (418 aa)). Residues 197-202 (SAGRVQ) form an interaction with DNA region. Tyrosine 324 serves as the catalytic O-(5'-phospho-DNA)-tyrosine intermediate. C4-type zinc fingers lie at residues 602–633 (CREC…KERC), 664–691 (CPIC…NPDC), and 713–738 (CDKC…NPTC).

This sequence belongs to the type IA topoisomerase family. In terms of assembly, monomer. Mg(2+) serves as cofactor.

It catalyses the reaction ATP-independent breakage of single-stranded DNA, followed by passage and rejoining.. Functionally, releases the supercoiling and torsional tension of DNA, which is introduced during the DNA replication and transcription, by transiently cleaving and rejoining one strand of the DNA duplex. Introduces a single-strand break via transesterification at a target site in duplex DNA. The scissile phosphodiester is attacked by the catalytic tyrosine of the enzyme, resulting in the formation of a DNA-(5'-phosphotyrosyl)-enzyme intermediate and the expulsion of a 3'-OH DNA strand. The free DNA strand then undergoes passage around the unbroken strand, thus removing DNA supercoils. Finally, in the religation step, the DNA 3'-OH attacks the covalent intermediate to expel the active-site tyrosine and restore the DNA phosphodiester backbone. The protein is DNA topoisomerase 1 of Pseudomonas aeruginosa (strain ATCC 15692 / DSM 22644 / CIP 104116 / JCM 14847 / LMG 12228 / 1C / PRS 101 / PAO1).